Consider the following 180-residue polypeptide: Putative protein 33K (180 aa).

The disordered stretch occupies residues 31–108; the sequence is LEEAYKQLEK…AKAPRNYGTP (78 aa). A compositionally biased stretch (basic and acidic residues) spans 33-43; it reads EAYKQLEKELG. The span at 60-78 shows a compositional bias: acidic residues; it reads PLSEGELEEISEEEEEEGE.

This is Putative protein 33K from Pantherophis guttatus (Corn snake).